An 83-amino-acid polypeptide reads, in one-letter code: Small ribosomal subunit protein bS16 (83 aa).

The protein belongs to the bacterial ribosomal protein bS16 family.

The polypeptide is Small ribosomal subunit protein bS16 (Shewanella putrefaciens (strain CN-32 / ATCC BAA-453)).